We begin with the raw amino-acid sequence, 208 residues long: Small ribosomal subunit protein uS4 (208 aa).

In terms of domain architecture, S4 RNA-binding spans 95–159 (RRIDNIVYRA…FKKLVRSNIE (65 aa)).

This sequence belongs to the universal ribosomal protein uS4 family. In terms of assembly, part of the 30S ribosomal subunit. Contacts protein S5. The interaction surface between S4 and S5 is involved in control of translational fidelity.

One of the primary rRNA binding proteins, it binds directly to 16S rRNA where it nucleates assembly of the body of the 30S subunit. Functionally, with S5 and S12 plays an important role in translational accuracy. The polypeptide is Small ribosomal subunit protein uS4 (Borrelia recurrentis (strain A1)).